The sequence spans 580 residues: High affinity choline transporter 1 (580 aa).

Residues 1–6 lie on the Extracellular side of the membrane; the sequence is MPFHVE. A helical membrane pass occupies residues 7–27; sequence GLVAIILFYLLIFLVGIWAAW. The Cytoplasmic segment spans residues 28-48; that stretch reads KTKNSGNAEERSEAIIVGGRD. A helical transmembrane segment spans residues 49 to 69; that stretch reads IGLLVGGFTMTATWVGGGYIN. Over 70–81 the chain is Extracellular; sequence GTAEAVYGPGCG. A helical membrane pass occupies residues 82 to 102; it reads LAWAQAPIGYSLSLILGGLFF. Residues 103–125 lie on the Cytoplasmic side of the membrane; the sequence is AKPMRSKGYVTMLDPFQQIYGKR. Residues 126–146 traverse the membrane as a helical segment; it reads MGGLLFIPALMGEMFWAAAIF. Topologically, residues 147-164 are extracellular; the sequence is SALGATISVIIDVDVNIS. The chain crosses the membrane as a helical span at residues 165-185; that stretch reads VIVSALIAILYTLVGGLYSVA. At 186–191 the chain is on the cytoplasmic side; sequence YTDVVQ. Residues 192 to 212 traverse the membrane as a helical segment; that stretch reads LFCIFIGLWISVPFALSHPAV. Residues 213-237 are Extracellular-facing; it reads TDIGFTAVHAKYQSPWLGTIESVEV. The helical transmembrane segment at 238 to 258 threads the bilayer; that stretch reads YTWLDNFLLLMLGGIPWQAYF. The Cytoplasmic portion of the chain corresponds to 259-274; that stretch reads QRVLSSSSATYAQVLS. A helical membrane pass occupies residues 275-295; that stretch reads FLAAFGCLVMALPAICIGAIG. Residues 296-317 are Extracellular-facing; sequence ASTDWNQTAYGFPDPKTKEEAD. The N-linked (GlcNAc...) asparagine glycan is linked to asparagine 301. The chain crosses the membrane as a helical span at residues 318 to 338; that stretch reads MILPIVLQYLCPVYISFFGLG. The Cytoplasmic segment spans residues 339-376; it reads AVSAAVMSSADSSILSASSMFARNIYQLSFRQNASDKE. A helical transmembrane segment spans residues 377–397; that stretch reads IVWVMRITVFVFGASATAMAL. Residues 398 to 406 are Extracellular-facing; the sequence is LTKTVYGLW. A helical membrane pass occupies residues 407–427; sequence YLSSDLVYIIIFPQLLCVLFI. Residues 428-435 are Cytoplasmic-facing; that stretch reads KGTNTYGA. Residues 436–456 traverse the membrane as a helical segment; the sequence is VAGYIFGLFLRITGGEPYLYL. The Extracellular portion of the chain corresponds to 457-481; it reads QPLIFYPGYYPDKNGIYNQRFPFKT. A helical membrane pass occupies residues 482 to 502; that stretch reads LSMVTSFFTNICVSYLAKYLF. The segment at 502 to 580 is mediates interaction with SEC14L1; that stretch reads FESGTLPPKL…EGSGTEDNLQ (79 aa). The Cytoplasmic portion of the chain corresponds to 503 to 580; sequence ESGTLPPKLD…EGSGTEDNLQ (78 aa). Residues 527–532 carry the Dileucine-like motif motif; the sequence is DKTILV.

It belongs to the sodium:solute symporter (SSF) (TC 2.A.21) family. As to quaternary structure, homooligomerizes at cell surface. Interacts with SEC14L1; may regulate SLC5A7. Phosphorylated. As to expression, expressed in basal forebrain, brain stem, spinal chord, and striatum. Specific for cholinergic neurons.

It is found in the presynaptic cell membrane. The protein localises to the cell projection. Its subcellular location is the axon. It localises to the early endosome membrane. The protein resides in the cytoplasmic vesicle. It is found in the secretory vesicle. The protein localises to the synaptic vesicle membrane. It carries out the reaction choline(out) + n Na(+)(out) = choline(in) + n Na(+)(in). Its activity is regulated as follows. Choline uptake activity is regulated by SLC5A7/CHT1 internalization (inactive form) from the cell surface and recycling of internalized SLC5A7/CHT1 into the cell surface (active form). Activated by extracellular chloride ion. Specifically inhibited by nanomolar concentrations of hemicholinium 3. In terms of biological role, high-affinity Na(+)-coupled choline transmembrane symporter. Functions as an electrogenic, voltage-dependent transporter with variable charge/choline stoichiometry. Choline uptake and choline-induced current is also Cl(-)-dependent where Cl(-) is likely a regulatory ion rather than cotransported ion. Plays a critical role in acetylcholine (ACh) synthesis by taking up the substrate choline from the synaptic cleft into the presynaptic nerve terminals after neurotransmitter release. SLC5A7/CHT1-mediated choline high-affinity transport in cholinergic neurons is the rate-limiting step for production of ACh, thereby facilitating communication by subsequent action potentials. Localized predominantly in presynaptic terminal intracellular organelles, and translocated to the plasma membrane in active form in response to neuronal activity. The chain is High affinity choline transporter 1 from Rattus norvegicus (Rat).